The chain runs to 406 residues: Cysteine--tRNA ligase (406 aa).

Position 16 (Cys16) interacts with Zn(2+). Residues 18–28 (PTVYSDVHIGN) carry the 'HIGH' region motif. Residues Cys192, His218, and Glu222 each coordinate Zn(2+). The 'KMSKS' region motif lies at 250–254 (KMAKS). Lys253 is a binding site for ATP.

It belongs to the class-I aminoacyl-tRNA synthetase family. In terms of assembly, monomer. Requires Zn(2+) as cofactor.

Its subcellular location is the cytoplasm. It carries out the reaction tRNA(Cys) + L-cysteine + ATP = L-cysteinyl-tRNA(Cys) + AMP + diphosphate. This is Cysteine--tRNA ligase from Mesomycoplasma hyopneumoniae (strain J / ATCC 25934 / NCTC 10110) (Mycoplasma hyopneumoniae).